The chain runs to 255 residues: 5-oxoprolinase subunit A (255 aa).

It belongs to the LamB/PxpA family. Forms a complex composed of PxpA, PxpB and PxpC.

It catalyses the reaction 5-oxo-L-proline + ATP + 2 H2O = L-glutamate + ADP + phosphate + H(+). In terms of biological role, catalyzes the cleavage of 5-oxoproline to form L-glutamate coupled to the hydrolysis of ATP to ADP and inorganic phosphate. The sequence is that of 5-oxoprolinase subunit A from Clostridium beijerinckii (strain ATCC 51743 / NCIMB 8052) (Clostridium acetobutylicum).